Reading from the N-terminus, the 235-residue chain is Probable 2-phosphosulfolactate phosphatase (235 aa).

Belongs to the ComB family. Mg(2+) is required as a cofactor.

The enzyme catalyses (2R)-O-phospho-3-sulfolactate + H2O = (2R)-3-sulfolactate + phosphate. This is Probable 2-phosphosulfolactate phosphatase from Clostridium novyi (strain NT).